Here is a 331-residue protein sequence, read N- to C-terminus: Fructose-1,6-bisphosphatase class 1 2 (331 aa).

Residues Glu-80, Asp-98, Leu-100, and Asp-101 each contribute to the Mg(2+) site. Residues 101-104 and Asn-189 each bind substrate; that span reads DGSS. Glu-261 is a binding site for Mg(2+).

It belongs to the FBPase class 1 family. In terms of assembly, homotetramer. It depends on Mg(2+) as a cofactor.

It localises to the cytoplasm. It carries out the reaction beta-D-fructose 1,6-bisphosphate + H2O = beta-D-fructose 6-phosphate + phosphate. It functions in the pathway carbohydrate biosynthesis; Calvin cycle. The chain is Fructose-1,6-bisphosphatase class 1 2 from Cereibacter sphaeroides (strain ATCC 17029 / ATH 2.4.9) (Rhodobacter sphaeroides).